The primary structure comprises 301 residues: Probable aspartoacylase (301 aa).

Zn(2+) contacts are provided by histidine 13 and glutamate 16. Residues arginine 54 and 61 to 62 (NR) each bind substrate. A Zn(2+)-binding site is contributed by histidine 105. Residues glutamate 163 and tyrosine 273 each coordinate substrate.

It belongs to the AspA/AstE family. Aspartoacylase subfamily. Zn(2+) is required as a cofactor.

It catalyses the reaction an N-acyl-L-aspartate + H2O = a carboxylate + L-aspartate. This chain is Probable aspartoacylase, found in Prochlorococcus marinus (strain MIT 9215).